Consider the following 490-residue polypeptide: Cytochrome P450 2C14 (490 aa).

C435 lines the heme pocket.

It belongs to the cytochrome P450 family. Requires heme as cofactor.

The protein localises to the endoplasmic reticulum membrane. It localises to the microsome membrane. It catalyses the reaction an organic molecule + reduced [NADPH--hemoprotein reductase] + O2 = an alcohol + oxidized [NADPH--hemoprotein reductase] + H2O + H(+). Functionally, cytochromes P450 are a group of heme-thiolate monooxygenases. In liver microsomes, this enzyme is involved in an NADPH-dependent electron transport pathway. It oxidizes a variety of structurally unrelated compounds, including steroids, fatty acids, and xenobiotics. In Oryctolagus cuniculus (Rabbit), this protein is Cytochrome P450 2C14 (CYP2C14).